Here is a 361-residue protein sequence, read N- to C-terminus: Probable pectinesterase 50 (361 aa).

An N-terminal signal peptide occupies residues 1–22 (MGYISMSVVAFLVVFASPVVLA). Gln-174 contacts substrate. Catalysis depends on Asp-197, which acts as the Proton donor. Asp-218 serves as the catalytic Nucleophile. Substrate-binding residues include Arg-275 and Trp-277.

The protein belongs to the pectinesterase family. Expressed in flower buds.

Its subcellular location is the secreted. It is found in the cell wall. It catalyses the reaction [(1-&gt;4)-alpha-D-galacturonosyl methyl ester](n) + n H2O = [(1-&gt;4)-alpha-D-galacturonosyl](n) + n methanol + n H(+). The protein operates within glycan metabolism; pectin degradation; 2-dehydro-3-deoxy-D-gluconate from pectin: step 1/5. Functionally, acts in the modification of cell walls via demethylesterification of cell wall pectin. The protein is Probable pectinesterase 50 (PME50) of Arabidopsis thaliana (Mouse-ear cress).